The sequence spans 130 residues: Small ribosomal subunit protein uS8y (130 aa).

Belongs to the universal ribosomal protein uS8 family.

The polypeptide is Small ribosomal subunit protein uS8y (RPS15AC) (Arabidopsis thaliana (Mouse-ear cress)).